A 128-amino-acid polypeptide reads, in one-letter code: Large ribosomal subunit protein bL12 (128 aa).

The protein belongs to the bacterial ribosomal protein bL12 family. In terms of assembly, homodimer. Part of the ribosomal stalk of the 50S ribosomal subunit. Forms a multimeric L10(L12)X complex, where L10 forms an elongated spine to which 2 to 4 L12 dimers bind in a sequential fashion. Binds GTP-bound translation factors.

Its function is as follows. Forms part of the ribosomal stalk which helps the ribosome interact with GTP-bound translation factors. Is thus essential for accurate translation. This is Large ribosomal subunit protein bL12 from Synechococcus sp. (strain CC9311).